The chain runs to 216 residues: Elongation factor Ts (216 aa).

An involved in Mg(2+) ion dislocation from EF-Tu region spans residues 81 to 84 (TDFV).

This sequence belongs to the EF-Ts family.

It localises to the cytoplasm. Functionally, associates with the EF-Tu.GDP complex and induces the exchange of GDP to GTP. It remains bound to the aminoacyl-tRNA.EF-Tu.GTP complex up to the GTP hydrolysis stage on the ribosome. In Citrifermentans bemidjiense (strain ATCC BAA-1014 / DSM 16622 / JCM 12645 / Bem) (Geobacter bemidjiensis), this protein is Elongation factor Ts.